Reading from the N-terminus, the 403-residue chain is Phosphopentomutase (403 aa).

Mn(2+) is bound by residues Asp13, Asp298, His303, Asp339, His340, and His351.

It belongs to the phosphopentomutase family. It depends on Mn(2+) as a cofactor.

It localises to the cytoplasm. It carries out the reaction 2-deoxy-alpha-D-ribose 1-phosphate = 2-deoxy-D-ribose 5-phosphate. The catalysed reaction is alpha-D-ribose 1-phosphate = D-ribose 5-phosphate. The protein operates within carbohydrate degradation; 2-deoxy-D-ribose 1-phosphate degradation; D-glyceraldehyde 3-phosphate and acetaldehyde from 2-deoxy-alpha-D-ribose 1-phosphate: step 1/2. Isomerase that catalyzes the conversion of deoxy-ribose 1-phosphate (dRib-1-P) and ribose 1-phosphate (Rib-1-P) to deoxy-ribose 5-phosphate (dRib-5-P) and ribose 5-phosphate (Rib-5-P), respectively. The protein is Phosphopentomutase of Streptococcus pyogenes serotype M5 (strain Manfredo).